A 333-amino-acid polypeptide reads, in one-letter code: C4-dicarboxylate-binding periplasmic protein DctP (333 aa).

The first 26 residues, 1–26 (MLTRRILGALVGATALSLALSVPALA), serve as a signal peptide directing secretion.

It belongs to the bacterial solute-binding protein 7 family. In terms of assembly, the complex comprises the extracytoplasmic solute receptor protein DctP, and the two transmembrane proteins DctQ and DctM.

It localises to the periplasm. In terms of biological role, part of the tripartite ATP-independent periplasmic (TRAP) transport system DctPQM involved in C4-dicarboxylates uptake. Binds C4-dicarboxylates such as fumarate, succinate, L-malate and D-malate. This Rhodobacter capsulatus (Rhodopseudomonas capsulata) protein is C4-dicarboxylate-binding periplasmic protein DctP.